Reading from the N-terminus, the 597-residue chain is MDHIRNFSIIAHIDHGKSTLADRIIQVCGGLADREMEAQVLDSMDIERERGITIKAQTAALSYRARDGKVYNLNLIDTPGHVDFSYEVSRSLSACEGALLVVDASQGVEAQTVANCYTAIELGVEVVPVLNKIDLPAANPENAIEEIEDVIGIDATDATRCSAKTGLGVEDVLESLIAKVPPPKGDPAAPLQALIIDSWFDNYVGVVMLVRIVNGTLRPKEKIKMMATGAQYPVEHVGVFTPKSRNLESLSAGQVGFIIAGIKELTAAKVGDTVTHVAKAASEPLPGFKEVKPQVFAGLYPVEANQYDALRESLEKLKLNDASLQYEPEVSQALGFGFRCGFLGLLHMEIVQERLEREFDMDLITTAPTVVYEVVQSDGSTIMVENPAKMPEPGRIAEVREPIVTVNLYMPQDYVGSVITLCEQKRGSQINMQYHGRQVQLTYEIPMAEIVLDFFDRLKSVSRGYASMDYEFKEYRSSDVVKVDMLINGDKVDALSIIVHRSQSQYRGREVAAKMREIIPRQMYDVAIQAAIGAHIVARENIKALRKNVLAKCYGGDITRKKKLLEKQKEGKKRMKQVGSVEIPQEAFLAILRVEDK.

The region spanning 2–184 (DHIRNFSIIA…SLIAKVPPPK (183 aa)) is the tr-type G domain. Residues 14–19 (DHGKST) and 131–134 (NKID) each bind GTP.

The protein belongs to the TRAFAC class translation factor GTPase superfamily. Classic translation factor GTPase family. LepA subfamily.

It is found in the cell inner membrane. It carries out the reaction GTP + H2O = GDP + phosphate + H(+). In terms of biological role, required for accurate and efficient protein synthesis under certain stress conditions. May act as a fidelity factor of the translation reaction, by catalyzing a one-codon backward translocation of tRNAs on improperly translocated ribosomes. Back-translocation proceeds from a post-translocation (POST) complex to a pre-translocation (PRE) complex, thus giving elongation factor G a second chance to translocate the tRNAs correctly. Binds to ribosomes in a GTP-dependent manner. This is Elongation factor 4 from Burkholderia ambifaria (strain MC40-6).